The chain runs to 193 residues: 3-isopropylmalate dehydratase small subunit (193 aa).

Belongs to the LeuD family. LeuD type 1 subfamily. Heterodimer of LeuC and LeuD.

It carries out the reaction (2R,3S)-3-isopropylmalate = (2S)-2-isopropylmalate. It participates in amino-acid biosynthesis; L-leucine biosynthesis; L-leucine from 3-methyl-2-oxobutanoate: step 2/4. In terms of biological role, catalyzes the isomerization between 2-isopropylmalate and 3-isopropylmalate, via the formation of 2-isopropylmaleate. This chain is 3-isopropylmalate dehydratase small subunit, found in Bacillus cereus (strain ATCC 10987 / NRS 248).